Consider the following 537-residue polypeptide: Chaperonin GroEL 2 (537 aa).

Residues 29–32 (TLGP), 86–90 (DGTTT), Gly-413, 477–479 (NAA), and Asp-493 contribute to the ATP site.

The protein belongs to the chaperonin (HSP60) family. Forms a cylinder of 14 subunits composed of two heptameric rings stacked back-to-back. Interacts with the co-chaperonin GroES.

The protein resides in the cytoplasm. The enzyme catalyses ATP + H2O + a folded polypeptide = ADP + phosphate + an unfolded polypeptide.. Together with its co-chaperonin GroES, plays an essential role in assisting protein folding. The GroEL-GroES system forms a nano-cage that allows encapsulation of the non-native substrate proteins and provides a physical environment optimized to promote and accelerate protein folding. This is Chaperonin GroEL 2 from Rhodococcus jostii (strain RHA1).